The sequence spans 64 residues: Cytochrome b-c1 complex subunit 9 (64 aa).

Topologically, residues 2-18 (SSPTIPSRLYSLLFRRT) are mitochondrial matrix. The chain crosses the membrane as a helical span at residues 19 to 43 (STFALTIAVGALFFERAFDQGADAI). Over 44 to 63 (YEHINEGKLWKHIKHKYENK) the chain is Mitochondrial intermembrane.

It belongs to the UQCR10/QCR9 family. As to quaternary structure, component of the ubiquinol-cytochrome c oxidoreductase (cytochrome b-c1 complex, complex III, CIII), a multisubunit enzyme composed of 11 subunits. The complex is composed of 3 respiratory subunits cytochrome b, cytochrome c1 and Rieske protein UQCRFS1, 2 core protein subunits UQCRC1/QCR1 and UQCRC2/QCR2, and 6 low-molecular weight protein subunits UQCRH/QCR6, UQCRB/QCR7, UQCRQ/QCR8, UQCR10/QCR9, UQCR11/QCR10 and subunit 9, the cleavage product of Rieske protein UQCRFS1. The complex exists as an obligatory dimer and forms supercomplexes (SCs) in the inner mitochondrial membrane with NADH-ubiquinone oxidoreductase (complex I, CI) and cytochrome c oxidase (complex IV, CIV), resulting in different assemblies (supercomplex SCI(1)III(2)IV(1) and megacomplex MCI(2)III(2)IV(2)). Interacts with STMP1.

Its subcellular location is the mitochondrion inner membrane. Functionally, component of the ubiquinol-cytochrome c oxidoreductase, a multisubunit transmembrane complex that is part of the mitochondrial electron transport chain which drives oxidative phosphorylation. The respiratory chain contains 3 multisubunit complexes succinate dehydrogenase (complex II, CII), ubiquinol-cytochrome c oxidoreductase (cytochrome b-c1 complex, complex III, CIII) and cytochrome c oxidase (complex IV, CIV), that cooperate to transfer electrons derived from NADH and succinate to molecular oxygen, creating an electrochemical gradient over the inner membrane that drives transmembrane transport and the ATP synthase. The cytochrome b-c1 complex catalyzes electron transfer from ubiquinol to cytochrome c, linking this redox reaction to translocation of protons across the mitochondrial inner membrane, with protons being carried across the membrane as hydrogens on the quinol. In the process called Q cycle, 2 protons are consumed from the matrix, 4 protons are released into the intermembrane space and 2 electrons are passed to cytochrome c. The sequence is that of Cytochrome b-c1 complex subunit 9 (Uqcr10) from Mus musculus (Mouse).